Reading from the N-terminus, the 375-residue chain is Circadian-associated transcriptional repressor (375 aa).

The span at 1–32 (MDSPSSVSSYSSSSLSPSFSTSSVNSDFSFPS) shows a compositional bias: low complexity. Disordered regions lie at residues 1–102 (MDSP…LNTQ), 192–218 (KSSSGGSRHQISKHFPSHHGDPGAASP), and 351–375 (DREMTKGHPEPQMTSHPPVAPDPQP). Basic and acidic residues predominate over residues 33–46 (DNEREGKGTHELRP).

As to quaternary structure, interacts with BMAL1, PER2, CRY2, BHLHE41, HDAC1 NR3C1.

The protein localises to the nucleus. Its subcellular location is the PML body. In terms of biological role, transcriptional repressor which forms a negative regulatory component of the circadian clock and acts independently of the circadian transcriptional repressors: CRY1, CRY2 and BHLHE41. In a histone deacetylase-dependent manner represses the transcriptional activator activity of the CLOCK-BMAL1 heterodimer. Abrogates the interaction of BMAL1 with the transcriptional coactivator CREBBP and can repress the histone acetyl-transferase activity of the CLOCK-BMAL1 heterodimer, reducing histone acetylation of its target genes. Rhythmically binds the E-box elements (5'-CACGTG-3') on circadian gene promoters and its occupancy shows circadian oscillation antiphasic to BMAL1. Interacts with the glucocorticoid receptor (NR3C1) and contributes to the repressive function in the glucocorticoid response. In Mus musculus (Mouse), this protein is Circadian-associated transcriptional repressor (Ciart).